The primary structure comprises 339 residues: Small ribosomal subunit biogenesis GTPase RsgA (339 aa).

The region spanning 111–271 (MRGLLKPVAA…LIDSPGIREF (161 aa)) is the CP-type G domain. GTP-binding positions include 159-162 (NKAD) and 213-221 (GQSGVGKSS). Residues cysteine 295, cysteine 300, histidine 302, and cysteine 308 each coordinate Zn(2+).

It belongs to the TRAFAC class YlqF/YawG GTPase family. RsgA subfamily. In terms of assembly, monomer. Associates with 30S ribosomal subunit, binds 16S rRNA. The cofactor is Zn(2+).

The protein localises to the cytoplasm. In terms of biological role, one of several proteins that assist in the late maturation steps of the functional core of the 30S ribosomal subunit. Helps release RbfA from mature subunits. May play a role in the assembly of ribosomal proteins into the subunit. Circularly permuted GTPase that catalyzes slow GTP hydrolysis, GTPase activity is stimulated by the 30S ribosomal subunit. The protein is Small ribosomal subunit biogenesis GTPase RsgA of Pseudomonas aeruginosa (strain ATCC 15692 / DSM 22644 / CIP 104116 / JCM 14847 / LMG 12228 / 1C / PRS 101 / PAO1).